A 209-amino-acid polypeptide reads, in one-letter code: Probable phosphatidylglycerophosphate synthase (209 aa).

The next 4 membrane-spanning stretches (helical) occupy residues 32-52, 105-125, 147-167, and 171-191; these read ILTL…FYGG, ALIG…LILT, WGGK…VLPL, and LHVA…ITGV.

It belongs to the CDP-alcohol phosphatidyltransferase class-I family.

It localises to the cell membrane. The catalysed reaction is a CDP-1,2-diacyl-sn-glycerol + sn-glycerol 3-phosphate = a 1,2-diacyl-sn-glycero-3-phospho-(1'-sn-glycero-3'-phosphate) + CMP + H(+). The protein operates within lipid metabolism; phospholipid metabolism. Its function is as follows. Probably catalyzes the synthesis of phosphatidylglycerophosphate by transferring a phosphatidyl group from CDP-diacylglycerol to glycerol 3-phosphate. This is Probable phosphatidylglycerophosphate synthase from Mycobacterium tuberculosis (strain CDC 1551 / Oshkosh).